The following is a 268-amino-acid chain: Tryptophan synthase alpha chain (268 aa).

Catalysis depends on proton acceptor residues glutamate 49 and aspartate 60.

This sequence belongs to the TrpA family. In terms of assembly, tetramer of two alpha and two beta chains.

The enzyme catalyses (1S,2R)-1-C-(indol-3-yl)glycerol 3-phosphate + L-serine = D-glyceraldehyde 3-phosphate + L-tryptophan + H2O. The protein operates within amino-acid biosynthesis; L-tryptophan biosynthesis; L-tryptophan from chorismate: step 5/5. The alpha subunit is responsible for the aldol cleavage of indoleglycerol phosphate to indole and glyceraldehyde 3-phosphate. In Yersinia pseudotuberculosis serotype O:1b (strain IP 31758), this protein is Tryptophan synthase alpha chain.